Reading from the N-terminus, the 370-residue chain is MALSAEGSSGGSRGGSPKAEAASVPSWPQILGRLTDNRDLARGQAAWAMDQIMTGNARPAQIAAFAVAMTMKAPTADEVGELAGVMLSHAHPLPADTVPDDAVDVVGTGGDGVNTVNLSTMAAIVVAAAGVPVVKHGNRAASSLSGGADTLEALGVRIDLGPDLVARSLAEVGIGFCFAPRFHPSYRHAAAVRREIGVPTVFNLLGPLTNPARPRAGLIGCAFADLAEVMAGVFAARRSSVLVVHGDDGLDELTTTTTSTIWRVAAGSVDKLTFDPAGFGFARAQLDQLAGGDAQANAAAVRAVLGGARGPVRDAVVLNAAGAIVAHAGLSSRAEWLPAWEEGLRRASAAIDTGAAEQLLARWVRFGRQI.

The segment at 1-27 (MALSAEGSSGGSRGGSPKAEAASVPSW) is disordered. 5-phospho-alpha-D-ribose 1-diphosphate contacts are provided by residues Gly-107, 110 to 111 (GD), Thr-115, 117 to 120 (NLST), 135 to 143 (KHGNRAASS), and Gly-147. Gly-107 contributes to the anthranilate binding site. Ser-119 lines the Mg(2+) pocket. An anthranilate-binding site is contributed by Asn-138. Residue Arg-193 participates in anthranilate binding. Mg(2+) is bound by residues Asp-251 and Glu-252.

It belongs to the anthranilate phosphoribosyltransferase family. As to quaternary structure, homodimer. Mg(2+) serves as cofactor.

The enzyme catalyses N-(5-phospho-beta-D-ribosyl)anthranilate + diphosphate = 5-phospho-alpha-D-ribose 1-diphosphate + anthranilate. It participates in amino-acid biosynthesis; L-tryptophan biosynthesis; L-tryptophan from chorismate: step 2/5. In terms of biological role, catalyzes the transfer of the phosphoribosyl group of 5-phosphorylribose-1-pyrophosphate (PRPP) to anthranilate to yield N-(5'-phosphoribosyl)-anthranilate (PRA). In Mycobacterium bovis (strain ATCC BAA-935 / AF2122/97), this protein is Anthranilate phosphoribosyltransferase.